The sequence spans 539 residues: Phosphoenolpyruvate carboxykinase (ATP) (539 aa).

The substrate site is built by Arg-64, Tyr-206, and Lys-212. ATP-binding positions include Lys-212, His-231, and 247 to 255; that span reads GLSGTGKTT. The Mn(2+) site is built by Lys-212 and His-231. Asp-268 contributes to the Mn(2+) binding site. ATP is bound by residues Glu-296, Arg-332, 448–449, and Thr-454; that span reads RI. Substrate is bound at residue Arg-332.

It belongs to the phosphoenolpyruvate carboxykinase (ATP) family. As to quaternary structure, monomer. Mn(2+) serves as cofactor.

It is found in the cytoplasm. It carries out the reaction oxaloacetate + ATP = phosphoenolpyruvate + ADP + CO2. Its pathway is carbohydrate biosynthesis; gluconeogenesis. Functionally, involved in the gluconeogenesis. Catalyzes the conversion of oxaloacetate (OAA) to phosphoenolpyruvate (PEP) through direct phosphoryl transfer between the nucleoside triphosphate and OAA. The polypeptide is Phosphoenolpyruvate carboxykinase (ATP) (Yersinia pestis bv. Antiqua (strain Antiqua)).